Reading from the N-terminus, the 346-residue chain is UDP-3-O-acylglucosamine N-acyltransferase (346 aa).

Residue His240 is the Proton acceptor of the active site.

Belongs to the transferase hexapeptide repeat family. LpxD subfamily. Homotrimer.

It carries out the reaction a UDP-3-O-[(3R)-3-hydroxyacyl]-alpha-D-glucosamine + a (3R)-hydroxyacyl-[ACP] = a UDP-2-N,3-O-bis[(3R)-3-hydroxyacyl]-alpha-D-glucosamine + holo-[ACP] + H(+). It participates in bacterial outer membrane biogenesis; LPS lipid A biosynthesis. Its function is as follows. Catalyzes the N-acylation of UDP-3-O-acylglucosamine using 3-hydroxyacyl-ACP as the acyl donor. Is involved in the biosynthesis of lipid A, a phosphorylated glycolipid that anchors the lipopolysaccharide to the outer membrane of the cell. In Bacteroides fragilis (strain ATCC 25285 / DSM 2151 / CCUG 4856 / JCM 11019 / LMG 10263 / NCTC 9343 / Onslow / VPI 2553 / EN-2), this protein is UDP-3-O-acylglucosamine N-acyltransferase.